A 758-amino-acid polypeptide reads, in one-letter code: 5-methyltetrahydropteroyltriglutamate--homocysteine methyltransferase (758 aa).

5-methyltetrahydropteroyltri-L-glutamate is bound by residues 17–20 and Lys-117; that span reads RELK. L-homocysteine is bound by residues 434-436 and Glu-487; that span reads IGS. L-methionine-binding positions include 434–436 and Glu-487; that span reads IGS. 5-methyltetrahydropteroyltri-L-glutamate is bound by residues 518-519 and Trp-564; that span reads RC. Residue Asp-602 participates in L-homocysteine binding. Asp-602 serves as a coordination point for L-methionine. Glu-608 contributes to the 5-methyltetrahydropteroyltri-L-glutamate binding site. Zn(2+) contacts are provided by His-644, Cys-646, and Glu-668. The Proton donor role is filled by His-697. Cys-729 contributes to the Zn(2+) binding site.

This sequence belongs to the vitamin-B12 independent methionine synthase family. Zn(2+) is required as a cofactor.

It catalyses the reaction 5-methyltetrahydropteroyltri-L-glutamate + L-homocysteine = tetrahydropteroyltri-L-glutamate + L-methionine. It participates in amino-acid biosynthesis; L-methionine biosynthesis via de novo pathway; L-methionine from L-homocysteine (MetE route): step 1/1. Catalyzes the transfer of a methyl group from 5-methyltetrahydrofolate to homocysteine resulting in methionine formation. This is 5-methyltetrahydropteroyltriglutamate--homocysteine methyltransferase from Yersinia pestis bv. Antiqua (strain Antiqua).